A 712-amino-acid polypeptide reads, in one-letter code: Ribosomal RNA large subunit methyltransferase K/L (712 aa).

The region spanning 46-157 (GAYQALLHSR…RENMVVSLDL (112 aa)) is the THUMP domain.

The protein belongs to the methyltransferase superfamily. RlmKL family.

It is found in the cytoplasm. It catalyses the reaction guanosine(2445) in 23S rRNA + S-adenosyl-L-methionine = N(2)-methylguanosine(2445) in 23S rRNA + S-adenosyl-L-homocysteine + H(+). The enzyme catalyses guanosine(2069) in 23S rRNA + S-adenosyl-L-methionine = N(2)-methylguanosine(2069) in 23S rRNA + S-adenosyl-L-homocysteine + H(+). Specifically methylates the guanine in position 2445 (m2G2445) and the guanine in position 2069 (m7G2069) of 23S rRNA. In Actinobacillus pleuropneumoniae serotype 3 (strain JL03), this protein is Ribosomal RNA large subunit methyltransferase K/L.